Reading from the N-terminus, the 406-residue chain is RING finger protein PSH1 (406 aa).

The segment at 30 to 72 adopts an RING-type zinc-finger fold; the sequence is CSICHDYMFVPMMTPCGHNYCYGCLNTWFASNTQKELACPQCR. 2 positions are modified to phosphoserine: S143 and S191. Residues 209 to 406 are disordered; sequence RFASTNPFAN…RVVLGDSDDE (198 aa). 3 stretches are compositionally biased toward acidic residues: residues 223-232, 256-274, and 281-291; these read SSEDDDSSEE, AVDDEDDEEEDEEEEEEMD, and IEDDEDDEDED. Position 310 is a phosphothreonine (T310). Phosphoserine is present on S403.

In terms of assembly, interacts with POB3 and SPT16.

Its subcellular location is the nucleus. In Saccharomyces cerevisiae (strain ATCC 204508 / S288c) (Baker's yeast), this protein is RING finger protein PSH1 (PSH1).